The primary structure comprises 130 residues: Iron-sulfur cluster assembly 1 homolog, mitochondrial (130 aa).

Residues 1-24 constitute a mitochondrion transit peptide; it reads MATRVVATATVRAVKGRKLIPTRA. Fe cation is bound by residues Cys58, Cys122, and Cys124.

This sequence belongs to the HesB/IscA family. As to quaternary structure, interacts with cry. Detected in head.

The protein resides in the mitochondrion. Functionally, involved in the assembly of mitochondrial iron-sulfur proteins. Probably involved in the binding of an intermediate of Fe/S cluster assembly. Required for maintenance of circadian rhythms under constant darkness. This Drosophila melanogaster (Fruit fly) protein is Iron-sulfur cluster assembly 1 homolog, mitochondrial.